We begin with the raw amino-acid sequence, 172 residues long: Signal peptidase complex catalytic subunit sec11 (172 aa).

Topologically, residues 1-14 (MLSGLANPRQAAVQ) are cytoplasmic. A helical; Signal-anchor for type II membrane protein membrane pass occupies residues 15–35 (LMNFGLILSTAFMMWKGISVI). Residues 36–172 (TDSPSPIVVV…MGLVVVLQRE (137 aa)) lie on the Lumenal side of the membrane. Catalysis depends on charge relay system residues serine 49 and histidine 90. Asparagine 111 is a glycosylation site (N-linked (GlcNAc...) asparagine). Residue aspartate 115 is the Charge relay system of the active site. The tract at residues 158 to 169 (VMLGLMGLVVVL) is C-terminal short (CTS) helix.

It belongs to the peptidase S26B family. In terms of assembly, component of the signal peptidase complex (SPC) composed of a catalytic subunit SEC11 and three accessory subunits SPC1, SPC2 and SPC3. The complex induces a local thinning of the ER membrane which is used to measure the length of the signal peptide (SP) h-region of protein substrates. This ensures the selectivity of the complex towards h-regions shorter than 18-20 amino acids. SPC associates with the translocon complex.

The protein localises to the endoplasmic reticulum membrane. It carries out the reaction Cleavage of hydrophobic, N-terminal signal or leader sequences from secreted and periplasmic proteins.. In terms of biological role, catalytic component of the signal peptidase complex (SPC) which catalyzes the cleavage of N-terminal signal sequences from nascent proteins as they are translocated into the lumen of the endoplasmic reticulum. Specifically cleaves N-terminal signal peptides that contain a hydrophobic alpha-helix (h-region) shorter than 18-20 amino acids. The sequence is that of Signal peptidase complex catalytic subunit sec11 (sec11) from Neurospora crassa (strain ATCC 24698 / 74-OR23-1A / CBS 708.71 / DSM 1257 / FGSC 987).